A 136-amino-acid chain; its full sequence is Ergosterol biosynthetic protein 28 (136 aa).

Helical transmembrane passes span 18 to 34 (VVVS…SFLT), 56 to 72 (FGIW…YCAY), 79 to 95 (VYFL…FHFL), and 109 to 125 (GLLS…WFMA).

The protein belongs to the ERG28 family. Heterotetramer of erg25, erg26, erg27 and erg28. Erg28 acts as a scaffold to tether erg27 and other 4,4-demethylation-related enzymes, forming a demethylation enzyme complex, in the endoplasmic reticulum.

Its subcellular location is the endoplasmic reticulum membrane. It participates in steroid metabolism; ergosterol biosynthesis. Part of the third module of ergosterol biosynthesis pathway that includes by the late steps of the pathway. Erg28 has a role as a scaffold to help anchor the catalytic components of the C-4 demethylation complex erg25, erg26 and erg27 to the endoplasmic reticulum. The third module or late pathway involves the ergosterol synthesis itself through consecutive reactions that mainly occur in the endoplasmic reticulum (ER) membrane. Firstly, the squalene synthase erg9 catalyzes the condensation of 2 farnesyl pyrophosphate moieties to form squalene, which is the precursor of all steroids. Secondly, squalene is converted into lanosterol by the consecutive action of the squalene epoxidase erg1 and the lanosterol synthase erg7. The lanosterol 14-alpha-demethylase erg11/cyp1 catalyzes C14-demethylation of lanosterol to produce 4,4'-dimethyl cholesta-8,14,24-triene-3-beta-ol. In the next steps, a complex process involving various demethylation, reduction and desaturation reactions catalyzed by the C-14 reductase erg24 and the C-4 demethylation complex erg25-erg26-erg27 leads to the production of zymosterol. Erg28 likely functions in the C-4 demethylation complex reaction by tethering erg26 and Erg27 to the endoplasmic reticulum or to facilitate interaction between these proteins. Then, the sterol 24-C-methyltransferase erg6 catalyzes the methyl transfer from S-adenosyl-methionine to the C-24 of zymosterol to form fecosterol. The C-8 sterol isomerase erg2 catalyzes the reaction which results in unsaturation at C-7 in the B ring of sterols and thus converts fecosterol to episterol. The sterol-C5-desaturases erg31 and erg32 then catalyze the introduction of a C-5 double bond in the B ring to produce 5-dehydroepisterol. The C-22 sterol desaturase erg5 further converts 5-dehydroepisterol into ergosta-5,7,22,24(28)-tetraen-3beta-ol by forming the C-22(23) double bond in the sterol side chain. Finally, ergosta-5,7,22,24(28)-tetraen-3beta-ol is substrate of the C-24(28) sterol reductase erg4 to produce ergosterol. In the genus Schizosaccharomyces, a second route exists between lanosterol and fecosterol, via the methylation of lanosterol to eburicol by erg6, followed by C14-demethylation by erg11/cyp1 and C4-demethylation by the demethylation complex erg25-erg26-erg27. Functionally, extends the chronological lifespan when overexpressed. The protein is Ergosterol biosynthetic protein 28 of Schizosaccharomyces pombe (strain 972 / ATCC 24843) (Fission yeast).